We begin with the raw amino-acid sequence, 372 residues long: MKYDLIIIGSGSVGAAAGYYATRAGLNVLMTDAHMPPHQHGSHHGDTRLIRHAYGEGEKYVPLVLRAQTLWDELSRHNEDDPIFVRSGVINLGPADSAFLANVAHSAEQWQLNVEKLDAQGIMARWPEIRVPDNYIGLFETDSGFLRSELAIKTWIQLAKEAGCAQLFNCPVTAIRHDDDGVTIETVDGEYQAKKAIVCAGTWVKDLLPELPVQPVRKVFAWYQADGRYSVKNKFPAFTGELPNGDQYYGFPAENDALKIGKHNGGQVIHSADERVPFAEVASDGSEAFPFLRNVLPGIGCCLYGAACTYDNSPDEDFIIDTLPGHDNTLLITGLSGHGFKFASVLGEIAADFAQDQKSDFDLTPFRLSRFQ.

4–34 (DLIIIGSGSVGAAAGYYATRAGLNVLMTDAH) contributes to the FAD binding site. Cys-308 bears the S-8alpha-FAD cysteine mark.

The protein belongs to the MSOX/MTOX family. MTOX subfamily. Monomer. Requires FAD as cofactor.

It catalyses the reaction N(alpha)-methyl-L-tryptophan + O2 + H2O = L-tryptophan + formaldehyde + H2O2. Its function is as follows. Catalyzes the oxidative demethylation of N-methyl-L-tryptophan. This Shigella flexneri serotype 5b (strain 8401) protein is N-methyl-L-tryptophan oxidase.